Here is a 205-residue protein sequence, read N- to C-terminus: dTTP/UTP pyrophosphatase (205 aa).

Asp66 (proton acceptor) is an active-site residue.

The protein belongs to the Maf family. YhdE subfamily. It depends on a divalent metal cation as a cofactor.

Its subcellular location is the cytoplasm. It catalyses the reaction dTTP + H2O = dTMP + diphosphate + H(+). The catalysed reaction is UTP + H2O = UMP + diphosphate + H(+). In terms of biological role, nucleoside triphosphate pyrophosphatase that hydrolyzes dTTP and UTP. May have a dual role in cell division arrest and in preventing the incorporation of modified nucleotides into cellular nucleic acids. The protein is dTTP/UTP pyrophosphatase of Anaeromyxobacter sp. (strain Fw109-5).